The primary structure comprises 203 residues: Orotate phosphoribosyltransferase (203 aa).

Residues Arg94, Lys98, His100, and 120 to 128 each bind 5-phospho-alpha-D-ribose 1-diphosphate; that span reads EDLISTGGS. Ser124 contacts orotate.

Belongs to the purine/pyrimidine phosphoribosyltransferase family. PyrE subfamily. Homodimer. The cofactor is Mg(2+).

It carries out the reaction orotidine 5'-phosphate + diphosphate = orotate + 5-phospho-alpha-D-ribose 1-diphosphate. The protein operates within pyrimidine metabolism; UMP biosynthesis via de novo pathway; UMP from orotate: step 1/2. Catalyzes the transfer of a ribosyl phosphate group from 5-phosphoribose 1-diphosphate to orotate, leading to the formation of orotidine monophosphate (OMP). The protein is Orotate phosphoribosyltransferase of Staphylococcus saprophyticus subsp. saprophyticus (strain ATCC 15305 / DSM 20229 / NCIMB 8711 / NCTC 7292 / S-41).